Reading from the N-terminus, the 356-residue chain is Heat-inducible transcription repressor HrcA (356 aa).

Belongs to the HrcA family.

In terms of biological role, negative regulator of class I heat shock genes (grpE-dnaK-dnaJ and groELS operons). Prevents heat-shock induction of these operons. The polypeptide is Heat-inducible transcription repressor HrcA (Chelativorans sp. (strain BNC1)).